We begin with the raw amino-acid sequence, 269 residues long: Putative ABC transporter ATP-binding protein PF0528 (269 aa).

The ABC transporter domain maps to 6–237 (IVVENLYSSY…EILKRNNLDV (232 aa)). ATP is bound at residue 39 to 46 (GPNGAGKS).

The protein belongs to the ABC transporter superfamily.

It localises to the cell membrane. Functionally, probably part of an ABC transporter complex. Responsible for energy coupling to the transport system. This Pyrococcus furiosus (strain ATCC 43587 / DSM 3638 / JCM 8422 / Vc1) protein is Putative ABC transporter ATP-binding protein PF0528.